The primary structure comprises 129 residues: Glycine cleavage system H protein (129 aa).

A Lipoyl-binding domain is found at 24–106 (SYTVGISEHA…YGDGWFFRIM (83 aa)). The residue at position 65 (lysine 65) is an N6-lipoyllysine.

It belongs to the GcvH family. The glycine cleavage system is composed of four proteins: P, T, L and H. (R)-lipoate is required as a cofactor.

The glycine cleavage system catalyzes the degradation of glycine. The H protein shuttles the methylamine group of glycine from the P protein to the T protein. The protein is Glycine cleavage system H protein of Shewanella loihica (strain ATCC BAA-1088 / PV-4).